The following is a 186-amino-acid chain: Quinone reductase (186 aa).

Residues 13 to 20, 80 to 83, and Ser116 each bind FMN; these read SLRKESYN and EHNR.

Belongs to the SsuE family. Homotetramer. Dimer of dimers. The tetrameric configuration has a central role in chromate reductase activity. FMN serves as cofactor.

It catalyses the reaction a quinone + NADH + H(+) = a quinol + NAD(+). The enzyme catalyses a quinone + NADPH + H(+) = a quinol + NADP(+). It carries out the reaction Cr(6+) + 2 NADH + O2 = Cr(3+) + superoxide + 2 NAD(+) + 2 H(+). The catalysed reaction is Cr(6+) + 2 NADPH + O2 = Cr(3+) + superoxide + 2 NADP(+) + 2 H(+). Its activity is regulated as follows. Non-competitively inhibited by sulfate. In terms of biological role, catalyzes the reduction of quinones. Acts by simultaneous two-electron transfer, avoiding formation of highly reactive semiquinone intermediates and producing quinols that promote tolerance of H(2)O(2). Quinone reduction is probably the primary biological role of ChrR. Can also reduce toxic chromate to insoluble and less toxic Cr(3+). Catalyzes the transfer of three electrons to Cr(6+) producing Cr(3+) and one electron to molecular oxygen. This reaction produces transiently a minimal amount of the toxic Cr(5+) species and reactive oxygen species (ROS). Chromate reduction protects the cell against chromate toxicity, but is likely a secondary activity. In Pseudomonas putida (Arthrobacter siderocapsulatus), this protein is Quinone reductase (chrR).